The chain runs to 60 residues: uncharacterized protein (60 aa).

This is an uncharacterized protein from Methanocaldococcus jannaschii (strain ATCC 43067 / DSM 2661 / JAL-1 / JCM 10045 / NBRC 100440) (Methanococcus jannaschii).